We begin with the raw amino-acid sequence, 633 residues long: ABC transporter G family member 1 (633 aa).

One can recognise an ABC transporter domain in the interval 23–265; the sequence is LTWEDLWVTA…FALSGFPCPT (243 aa). 60–67 contacts ATP; the sequence is GPSGSGKS. The 213-residue stretch at 340-552 folds into the ABC transmembrane type-2 domain; sequence TQSLVLTRRS…AYEGMFKNEF (213 aa). The N-linked (GlcNAc...) asparagine glycan is linked to N352. Helical transmembrane passes span 364-384, 394-414, 440-460, 470-490, 498-518, and 580-600; these read LAVY…VGFS, MLMF…PSFV, LSAM…AYFM, FIYF…LMMI, FLMG…SGGF, and IDLV…LLVV.

This sequence belongs to the ABC transporter superfamily. ABCG family. Homodimer. In terms of tissue distribution, restricted to the petals, with the highest expression in the limb and, to a lesser extent, in petal tubes, probably in both epidermal and mesophyll cell layers.

The protein localises to the cell membrane. In terms of biological role, ABC transporter controlling the release of volatile organic compounds (VOCs), including floral volatile benzenoids and phenylpropanoids (FVBP), in flowers of fragrant cultivars (e.g. cv. Mitchell and cv. V26). This scent, mostly produced in the evening and night by the petals, attracts the pollinators (e.g. the night-active hawkmoth pollinator Manduca sexta). The protein is ABC transporter G family member 1 of Petunia hybrida (Petunia).